The sequence spans 269 residues: Integral membrane protein 2C (269 aa).

A Phosphothreonine modification is found at Thr39. The chain crosses the membrane as a helical; Signal-anchor for type II membrane protein span at residues 57–77 (VGGVCYLSMGMVVLLMGLVFA). Residues 138–232 (FGGGDPADII…LCNGKDTYRL (95 aa)) form the BRICHOS domain. Cys165 and Cys224 are disulfide-bonded. Asn171 carries N-linked (GlcNAc...) asparagine glycosylation.

Belongs to the ITM2 family. Interacts with BACE1. Interacts with APP. Interacts with STMN2. In terms of processing, type I membrane-bound, as well as soluble, furin has a pre-eminent role in ITM2C proteolytic processing. PCSK7 and PCSK5 may also be involved although to a lesser extent. The soluble form of PCSK7 is incapable of processing ITM2C. Fails to undergo shedding by ADAM10 and intramembrane cleavage by SPPL2B.

It is found in the lysosome membrane. The protein resides in the cell membrane. In terms of biological role, negative regulator of amyloid-beta peptide production. May inhibit the processing of APP by blocking its access to alpha- and beta-secretase. Binding to the beta-secretase-cleaved APP C-terminal fragment is negligible, suggesting that ITM2C is a poor gamma-secretase cleavage inhibitor. May play a role in TNF-induced cell death and neuronal differentiation. The chain is Integral membrane protein 2C (ITM2C) from Sus scrofa (Pig).